The sequence spans 244 residues: Large ribosomal subunit protein uL30B (244 aa).

Positions 1 to 11 (MSTEKILTPES) are enriched in polar residues. The disordered stretch occupies residues 1–21 (MSTEKILTPESQLKKTKAQQK).

Belongs to the universal ribosomal protein uL30 family. In terms of assembly, component of the large ribosomal subunit (LSU). Mature yeast ribosomes consist of a small (40S) and a large (60S) subunit. The 40S small subunit contains 1 molecule of ribosomal RNA (18S rRNA) and 33 different proteins (encoded by 57 genes). The large 60S subunit contains 3 rRNA molecules (25S, 5.8S and 5S rRNA) and 46 different proteins (encoded by 81 genes).

Its subcellular location is the cytoplasm. Component of the ribosome, a large ribonucleoprotein complex responsible for the synthesis of proteins in the cell. The small ribosomal subunit (SSU) binds messenger RNAs (mRNAs) and translates the encoded message by selecting cognate aminoacyl-transfer RNA (tRNA) molecules. The large subunit (LSU) contains the ribosomal catalytic site termed the peptidyl transferase center (PTC), which catalyzes the formation of peptide bonds, thereby polymerizing the amino acids delivered by tRNAs into a polypeptide chain. The nascent polypeptides leave the ribosome through a tunnel in the LSU and interact with protein factors that function in enzymatic processing, targeting, and the membrane insertion of nascent chains at the exit of the ribosomal tunnel. The chain is Large ribosomal subunit protein uL30B from Saccharomyces cerevisiae (strain ATCC 204508 / S288c) (Baker's yeast).